We begin with the raw amino-acid sequence, 356 residues long: Protein-glutamate methylesterase/protein-glutamine glutaminase 2 (356 aa).

One can recognise a Response regulatory domain in the interval 4–121; it reads KVLIVDDSAV…KGFLEESSHE (118 aa). Asp-55 carries the 4-aspartylphosphate modification. Residues 169–356 enclose the CheB-type methylesterase domain; the sequence is FATTERIIAI…LELIAKAICR (188 aa). Residues Ser-181, His-207, and Asp-303 contribute to the active site.

This sequence belongs to the CheB family. Post-translationally, phosphorylated by CheA. Phosphorylation of the N-terminal regulatory domain activates the methylesterase activity.

The protein resides in the cytoplasm. It catalyses the reaction [protein]-L-glutamate 5-O-methyl ester + H2O = L-glutamyl-[protein] + methanol + H(+). The catalysed reaction is L-glutaminyl-[protein] + H2O = L-glutamyl-[protein] + NH4(+). Involved in chemotaxis. Part of a chemotaxis signal transduction system that modulates chemotaxis in response to various stimuli. Catalyzes the demethylation of specific methylglutamate residues introduced into the chemoreceptors (methyl-accepting chemotaxis proteins or MCP) by CheR. Also mediates the irreversible deamidation of specific glutamine residues to glutamic acid. This is Protein-glutamate methylesterase/protein-glutamine glutaminase 2 from Chromobacterium violaceum (strain ATCC 12472 / DSM 30191 / JCM 1249 / CCUG 213 / NBRC 12614 / NCIMB 9131 / NCTC 9757 / MK).